The sequence spans 181 residues: NAD(P)H-quinone oxidoreductase subunit I, chloroplastic (181 aa).

4Fe-4S ferredoxin-type domains lie at 55–84 (GRIH…VDWE) and 95–124 (KNYS…MTEE). C64, C67, C70, C74, C104, C107, C110, and C114 together coordinate [4Fe-4S] cluster.

It belongs to the complex I 23 kDa subunit family. In terms of assembly, NDH is composed of at least 16 different subunits, 5 of which are encoded in the nucleus. Requires [4Fe-4S] cluster as cofactor.

The protein localises to the plastid. The protein resides in the chloroplast thylakoid membrane. The enzyme catalyses a plastoquinone + NADH + (n+1) H(+)(in) = a plastoquinol + NAD(+) + n H(+)(out). It catalyses the reaction a plastoquinone + NADPH + (n+1) H(+)(in) = a plastoquinol + NADP(+) + n H(+)(out). NDH shuttles electrons from NAD(P)H:plastoquinone, via FMN and iron-sulfur (Fe-S) centers, to quinones in the photosynthetic chain and possibly in a chloroplast respiratory chain. The immediate electron acceptor for the enzyme in this species is believed to be plastoquinone. Couples the redox reaction to proton translocation, and thus conserves the redox energy in a proton gradient. The protein is NAD(P)H-quinone oxidoreductase subunit I, chloroplastic of Angiopteris evecta (Mule's foot fern).